Reading from the N-terminus, the 326-residue chain is MATLFDLPDLVLLEIFSYLPVRDRIRISRVCHRWKRLVDDRWLWRHVDLTLYTMRPKVMWHLLRRYMASRLYSLRMGGYLFSGSQAPQLSPALMRALGQKCPNLKRLCLHVADLSMVPITSLPSTLRTLELHSCEISMIWLQKEQDPTVLPLLECIVLDRVPAFRDEHLQGLTRFRALRSLVLGGTYRVTETGLDASLQELSYLQRLEVLGCTLSADSTLLAISRHLRDVRKIRLTVGGLSAQGLVFLEGMPVLESLCFQGPLITPDMPTPTQIVSSCLTMPKLRVLEVQGLGWEGQEAEKILCKGLPHCIVIVRACPKESMDWWM.

The F-box domain occupies 1 to 47 (MATLFDLPDLVLLEIFSYLPVRDRIRISRVCHRWKRLVDDRWLWRHV). 8 LRR repeats span residues 51–78 (LYTM…RMGG), 86–111 (APQL…CLHV), 113–133 (DLSM…ELHS), 161–185 (VPAF…VLGG), 186–211 (TYRV…EVLG), 212–236 (CTLS…IRLT), 237–261 (VGGL…CFQG), and 266–291 (PDMP…EVQG).

As to quaternary structure, interacts with SKP1 and CUL1.

It participates in protein modification; protein ubiquitination. Substrate-recognition component of the SCF (SKP1-CUL1-F-box protein)-type E3 ubiquitin ligase complex. Mediates the polyubiquitination and proteasomal degradation of CAMK1 leading to disruption of cyclin D1/CDK4 complex assembly which results in G1 cell cycle arrest in lung epithelia. This chain is F-box/LRR-repeat protein 12 (Fbxl12), found in Mus musculus (Mouse).